A 201-amino-acid polypeptide reads, in one-letter code: FMN-dependent NADH:quinone oxidoreductase (201 aa).

Residues serine 10, 16 to 18 (SQS), 96 to 99 (MYNF), and 140 to 143 (SRGG) each bind FMN.

This sequence belongs to the azoreductase type 1 family. Homodimer. It depends on FMN as a cofactor.

It carries out the reaction 2 a quinone + NADH + H(+) = 2 a 1,4-benzosemiquinone + NAD(+). The enzyme catalyses N,N-dimethyl-1,4-phenylenediamine + anthranilate + 2 NAD(+) = 2-(4-dimethylaminophenyl)diazenylbenzoate + 2 NADH + 2 H(+). Quinone reductase that provides resistance to thiol-specific stress caused by electrophilic quinones. Its function is as follows. Also exhibits azoreductase activity. Catalyzes the reductive cleavage of the azo bond in aromatic azo compounds to the corresponding amines. This Citrobacter koseri (strain ATCC BAA-895 / CDC 4225-83 / SGSC4696) protein is FMN-dependent NADH:quinone oxidoreductase.